Consider the following 159-residue polypeptide: MEFQTADLCDANESRVKIVSPMFRSYGGRGAFCGRITTLKVFEDNSLVRTALEGPGQGKVLVVDGGGSMRCALVGDQLALLGVKNQWAGVIVYGCIRDSKAIGTMELGVFALGSHPLKSIKKGAGDVDIAVTFGGVTFTPGHFIYADEDGVVVSESSLL.

Residues 75 to 78 (GDQL) and R97 contribute to the substrate site. D98 contacts a divalent metal cation.

Belongs to the class II aldolase/RraA-like family. Homotrimer. It depends on a divalent metal cation as a cofactor.

It catalyses the reaction 4-hydroxy-4-methyl-2-oxoglutarate = 2 pyruvate. The catalysed reaction is oxaloacetate + H(+) = pyruvate + CO2. In terms of biological role, catalyzes the aldol cleavage of 4-hydroxy-4-methyl-2-oxoglutarate (HMG) into 2 molecules of pyruvate. Also contains a secondary oxaloacetate (OAA) decarboxylase activity due to the common pyruvate enolate transition state formed following C-C bond cleavage in the retro-aldol and decarboxylation reactions. This chain is Putative 4-hydroxy-4-methyl-2-oxoglutarate aldolase, found in Aromatoleum aromaticum (strain DSM 19018 / LMG 30748 / EbN1) (Azoarcus sp. (strain EbN1)).